Consider the following 280-residue polypeptide: Probable endonuclease 4 (280 aa).

Zn(2+)-binding residues include H77, H117, E148, D180, H183, H215, D228, H230, and E259.

It belongs to the AP endonuclease 2 family. Zn(2+) serves as cofactor.

The catalysed reaction is Endonucleolytic cleavage to 5'-phosphooligonucleotide end-products.. In terms of biological role, endonuclease IV plays a role in DNA repair. It cleaves phosphodiester bonds at apurinic or apyrimidinic (AP) sites, generating a 3'-hydroxyl group and a 5'-terminal sugar phosphate. This Thermoplasma volcanium (strain ATCC 51530 / DSM 4299 / JCM 9571 / NBRC 15438 / GSS1) protein is Probable endonuclease 4.